A 103-amino-acid chain; its full sequence is Pyrimidine/purine nucleoside phosphorylase (103 aa).

The protein belongs to the nucleoside phosphorylase PpnP family.

The enzyme catalyses a purine D-ribonucleoside + phosphate = a purine nucleobase + alpha-D-ribose 1-phosphate. The catalysed reaction is adenosine + phosphate = alpha-D-ribose 1-phosphate + adenine. It carries out the reaction cytidine + phosphate = cytosine + alpha-D-ribose 1-phosphate. It catalyses the reaction guanosine + phosphate = alpha-D-ribose 1-phosphate + guanine. The enzyme catalyses inosine + phosphate = alpha-D-ribose 1-phosphate + hypoxanthine. The catalysed reaction is thymidine + phosphate = 2-deoxy-alpha-D-ribose 1-phosphate + thymine. It carries out the reaction uridine + phosphate = alpha-D-ribose 1-phosphate + uracil. It catalyses the reaction xanthosine + phosphate = alpha-D-ribose 1-phosphate + xanthine. In terms of biological role, catalyzes the phosphorolysis of diverse nucleosides, yielding D-ribose 1-phosphate and the respective free bases. Can use uridine, adenosine, guanosine, cytidine, thymidine, inosine and xanthosine as substrates. Also catalyzes the reverse reactions. This is Pyrimidine/purine nucleoside phosphorylase from Geobacter sp. (strain M21).